The sequence spans 126 residues: Ribosome-binding factor A (126 aa).

This sequence belongs to the RbfA family. Monomer. Binds 30S ribosomal subunits, but not 50S ribosomal subunits or 70S ribosomes.

It is found in the cytoplasm. Functionally, one of several proteins that assist in the late maturation steps of the functional core of the 30S ribosomal subunit. Associates with free 30S ribosomal subunits (but not with 30S subunits that are part of 70S ribosomes or polysomes). Required for efficient processing of 16S rRNA. May interact with the 5'-terminal helix region of 16S rRNA. The sequence is that of Ribosome-binding factor A from Treponema pallidum (strain Nichols).